A 314-amino-acid chain; its full sequence is Galectin-12 (314 aa).

2 consecutive Galectin domains span residues 27–161 (YGTT…VGFL) and 190–314 (CSRA…CVHC).

Its subcellular location is the nucleus. In terms of biological role, binds lactose. May participate in the apoptosis of adipocytes. This chain is Galectin-12 (Lgals12), found in Mus musculus (Mouse).